We begin with the raw amino-acid sequence, 130 residues long: Small ribosomal subunit protein uS8 (130 aa).

Belongs to the universal ribosomal protein uS8 family. As to quaternary structure, part of the 30S ribosomal subunit. Contacts proteins S5 and S12.

Its function is as follows. One of the primary rRNA binding proteins, it binds directly to 16S rRNA central domain where it helps coordinate assembly of the platform of the 30S subunit. The sequence is that of Small ribosomal subunit protein uS8 from Haemophilus influenzae (strain 86-028NP).